The chain runs to 435 residues: Flavonol 7-O-rhamnosyltransferase (435 aa).

UDP is bound at residue Gln-18. Gln-18 contributes to the UDP-beta-L-rhamnose binding site. His-21 acts as the Proton acceptor in catalysis. His-21 contributes to the quercetin binding site. Asp-119 acts as the Charge relay in catalysis. Residues Ser-250, Ala-315, His-332, Gly-336, Ser-337, and Glu-340 each contribute to the UDP site. Ser-250, Ala-315, His-332, Gly-336, Ser-337, and Glu-340 together coordinate UDP-beta-L-rhamnose.

It belongs to the UDP-glycosyltransferase family. Highly expressed in floral buds. Expressed in stems, leaves and flowers. Expressed at low levels in roots and siliques. Expressed on the adaxial side of cotyledons and emerging leaves, in trichomes, root columella cells, and the late elongation/early differentiation zone of roots.

The enzyme catalyses quercitrin + UDP-beta-L-rhamnose = quercetin 3,7-bis-O-alpha-L-rhamnoside + UDP + H(+). It catalyses the reaction quercetin 3-O-beta-D-glucoside + UDP-beta-L-rhamnose = quercetin 3-O-beta-D-glucoside-7-O-alpha-L-rhamnoside + UDP + H(+). It functions in the pathway flavonoid metabolism. In terms of biological role, flavonol 7-O-rhamnosyltransferase that catalyzes the transfer of rhamnose from UDP-rhamnose to the 7-OH position of 3-O-glycosylated flavonols, such as kaempferol 3-O-rhamnoside, kaempferol 3-O-glucoside, quercetin 3-O-glucoside, quercetin 3-O-galactoside, quercetin 3-O-rhamnoside and isorhamnetin 3-O-glucoside. Is able to glycosylate the flavonols quercetin and kaempferol to yield quercetin 7-O-rhamnoside and kaempferol 7-O-rhamnoside. Shows a strict specificity for UDP-rhamnose as sugar donor. Does not act on 3-O-glycosylated anthocyanins. The accumulation of kaempferol 3-O-rhamnoside-7-O-rhamnoside inhibits basipetal auxin transport, which influences auxin distribution and plant organ development. The protein is Flavonol 7-O-rhamnosyltransferase of Arabidopsis thaliana (Mouse-ear cress).